Consider the following 300-residue polypeptide: Inosose dehydratase (300 aa).

It belongs to the IolE/MocC family. The cofactor is glutathione. Co(2+) serves as cofactor. Requires Mn(2+) as cofactor.

The enzyme catalyses scyllo-inosose = 3D-3,5/4-trihydroxycyclohexane-1,2-dione + H2O. Catalyzes the dehydration of inosose (2-keto-myo-inositol, 2KMI or 2,4,6/3,5-pentahydroxycyclohexanone) to 3D-(3,5/4)-trihydroxycyclohexane-1,2-dione (D-2,3-diketo-4-deoxy-epi-inositol). In Mesomycoplasma hyopneumoniae (strain 232) (Mycoplasma hyopneumoniae), this protein is Inosose dehydratase.